Reading from the N-terminus, the 206-residue chain is Ribosomal RNA large subunit methyltransferase E (206 aa).

S-adenosyl-L-methionine-binding residues include Gly60, Trp62, Asp80, Asp96, and Asp121. The active-site Proton acceptor is Lys161.

The protein belongs to the class I-like SAM-binding methyltransferase superfamily. RNA methyltransferase RlmE family.

Its subcellular location is the cytoplasm. The catalysed reaction is uridine(2552) in 23S rRNA + S-adenosyl-L-methionine = 2'-O-methyluridine(2552) in 23S rRNA + S-adenosyl-L-homocysteine + H(+). Functionally, specifically methylates the uridine in position 2552 of 23S rRNA at the 2'-O position of the ribose in the fully assembled 50S ribosomal subunit. In Legionella pneumophila (strain Corby), this protein is Ribosomal RNA large subunit methyltransferase E.